We begin with the raw amino-acid sequence, 89 residues long: Small ribosomal subunit protein uS15 (89 aa).

This sequence belongs to the universal ribosomal protein uS15 family. As to quaternary structure, part of the 30S ribosomal subunit. Forms a bridge to the 50S subunit in the 70S ribosome, contacting the 23S rRNA.

In terms of biological role, one of the primary rRNA binding proteins, it binds directly to 16S rRNA where it helps nucleate assembly of the platform of the 30S subunit by binding and bridging several RNA helices of the 16S rRNA. Its function is as follows. Forms an intersubunit bridge (bridge B4) with the 23S rRNA of the 50S subunit in the ribosome. This Pseudomonas savastanoi pv. phaseolicola (strain 1448A / Race 6) (Pseudomonas syringae pv. phaseolicola (strain 1448A / Race 6)) protein is Small ribosomal subunit protein uS15.